A 305-amino-acid polypeptide reads, in one-letter code: MSNLPFTVAALYCFAPLPQYESLREPLAQLCCANGIKGTLLLAAEGINGTVAGSAGAIEKLIAHITAIPGLGEPELKYSHASEMPFHRMKVRLKREIVTMGVEGIDPLKSVGTYIAPKDWNALIADENTVVVDTRNDYEYAIGTFEGAIDPQTRTFREFPEWVKQNRDRLEGKKIAMFCTGGIRCEKATAFVKGLGFDDVYHLKGGILKYLEEVPREQSVWNGECFVFDERVAVGHGLAESDVELCRACRRPLTPQDKLSQFFEEGVSCAGCYAERTPEDRARYAERQKQVKLAEKRGANKHIGS.

The region spanning 125-219 (ADENTVVVDT…YLEEVPREQS (95 aa)) is the Rhodanese domain. Catalysis depends on cysteine 179, which acts as the Cysteine persulfide intermediate.

The protein belongs to the TrhO family.

The catalysed reaction is uridine(34) in tRNA + AH2 + O2 = 5-hydroxyuridine(34) in tRNA + A + H2O. Its function is as follows. Catalyzes oxygen-dependent 5-hydroxyuridine (ho5U) modification at position 34 in tRNAs. This Brucella canis (strain ATCC 23365 / NCTC 10854 / RM-666) protein is tRNA uridine(34) hydroxylase.